The following is a 323-amino-acid chain: tRNA-dihydrouridine(16) synthase (323 aa).

FMN contacts are provided by residues Pro7–Glu9 and Gln68. The active-site Proton donor is Cys98. FMN-binding positions include Lys139, Asn200 to Glu202, and Cys224 to Arg225.

Belongs to the Dus family. DusC subfamily. FMN is required as a cofactor.

The catalysed reaction is 5,6-dihydrouridine(16) in tRNA + NADP(+) = uridine(16) in tRNA + NADPH + H(+). It catalyses the reaction 5,6-dihydrouridine(16) in tRNA + NAD(+) = uridine(16) in tRNA + NADH + H(+). Catalyzes the synthesis of 5,6-dihydrouridine (D), a modified base found in the D-loop of most tRNAs, via the reduction of the C5-C6 double bond in target uridines. Specifically modifies U16 in tRNAs. The sequence is that of tRNA-dihydrouridine(16) synthase from Vibrio cholerae serotype O1 (strain ATCC 39315 / El Tor Inaba N16961).